Reading from the N-terminus, the 96-residue chain is Protein CLAVATA 3 (96 aa).

The signal sequence occupies residues 1–21 (MDSKSFLLLLLLFCFLFLHDA). The segment at 68-96 (ELRTVPSGPDPLHHHVNPPRQPRNNFQLP) is disordered. Hydroxyproline is present on residues Pro73 and Pro76. O-linked (Ara...) hydroxyproline glycosylation is present at Pro76.

This sequence belongs to the CLV3/ESR signal peptide family. As to quaternary structure, interacts with the extracellular leucine-rich repeat region of CLV1. Interacts with CLV2. CLV3-derived CLE peptides interacts with a tetrameric complex made of two CLV2/CRN heterodimers. The MCLV3 peptide contains two hydroxyprolines, but hydroxylation had no direct effect on MCLV3 activity. In terms of processing, the O-glycosylation (arabinosylation) of the hydroxyproline P-76 enhances binding affinity of the MCLV3 peptide for its receptor. First detected in heart stage embryos in a patch of cells between the developing cotyledons. In vegetative and inflorescence meristems, expressed in a small cone of cells at the meristem apex.

Its subcellular location is the secreted. The protein localises to the extracellular space. Extracellular signal that regulates meristem maintenance. Acts with CLV1 as a ligand-receptor pair in a signal transduction pathway coordinating growth between adjacent meristematic regions and controlling the balance between meristem cell proliferation and differentiation. Functionally, the secreted peptide MCLV3 activates a signal transduction cascade to restrict WUSCHEL (WUS) expression, inducing shoot and root meristem consumption as cells differentiated into other organs. The polypeptide is Protein CLAVATA 3 (Arabidopsis thaliana (Mouse-ear cress)).